The sequence spans 401 residues: Carbamoyl phosphate synthase small chain (401 aa).

The tract at residues 1 to 203 (MTATPAWTIQ…EGYSTLGETD (203 aa)) is CPSase. L-glutamine is bound by residues serine 56, glycine 255, and glycine 257. The Glutamine amidotransferase type-1 domain occupies 207–395 (HVVALDYGVK…LNLIREKKGE (189 aa)). Cysteine 284 serves as the catalytic Nucleophile. Residues leucine 285, glutamine 288, asparagine 326, glycine 328, and phenylalanine 329 each contribute to the L-glutamine site. Catalysis depends on residues histidine 368 and glutamate 370.

It belongs to the CarA family. As to quaternary structure, composed of two chains; the small (or glutamine) chain promotes the hydrolysis of glutamine to ammonia, which is used by the large (or ammonia) chain to synthesize carbamoyl phosphate. Tetramer of heterodimers (alpha,beta)4.

It catalyses the reaction hydrogencarbonate + L-glutamine + 2 ATP + H2O = carbamoyl phosphate + L-glutamate + 2 ADP + phosphate + 2 H(+). The catalysed reaction is L-glutamine + H2O = L-glutamate + NH4(+). It participates in amino-acid biosynthesis; L-arginine biosynthesis; carbamoyl phosphate from bicarbonate: step 1/1. The protein operates within pyrimidine metabolism; UMP biosynthesis via de novo pathway; (S)-dihydroorotate from bicarbonate: step 1/3. Functionally, small subunit of the glutamine-dependent carbamoyl phosphate synthetase (CPSase). CPSase catalyzes the formation of carbamoyl phosphate from the ammonia moiety of glutamine, carbonate, and phosphate donated by ATP, constituting the first step of 2 biosynthetic pathways, one leading to arginine and/or urea and the other to pyrimidine nucleotides. The small subunit (glutamine amidotransferase) binds and cleaves glutamine to supply the large subunit with the substrate ammonia. The protein is Carbamoyl phosphate synthase small chain of Rhizobium meliloti (strain 1021) (Ensifer meliloti).